The chain runs to 334 residues: S-adenosylmethionine decarboxylase proenzyme (334 aa).

Substrate is bound at residue F7. Residues E8 and E11 contribute to the active site. E67 serves as a coordination point for substrate. S68 acts as the Schiff-base intermediate with substrate; via pyruvic acid in catalysis. A Pyruvic acid (Ser); by autocatalysis modification is found at S68. The active-site Proton donor; for catalytic activity is the C82. F223 serves as a coordination point for substrate. Catalysis depends on proton acceptor; for processing activity residues S229 and H243. Substrate is bound at residue E247. Residue S298 is modified to Phosphoserine.

It belongs to the eukaryotic AdoMetDC family. As to quaternary structure, heterotetramer of two alpha and two beta chains. Pyruvate is required as a cofactor. Is synthesized initially as an inactive proenzyme. Formation of the active enzyme involves a self-maturation process in which the active site pyruvoyl group is generated from an internal serine residue via an autocatalytic post-translational modification. Two non-identical subunits are generated from the proenzyme in this reaction, and the pyruvate is formed at the N-terminus of the alpha chain, which is derived from the carboxyl end of the proenzyme. The post-translation cleavage follows an unusual pathway, termed non-hydrolytic serinolysis, in which the side chain hydroxyl group of the serine supplies its oxygen atom to form the C-terminus of the beta chain, while the remainder of the serine residue undergoes an oxidative deamination to produce ammonia and the pyruvoyl group blocking the N-terminus of the alpha chain.

The catalysed reaction is S-adenosyl-L-methionine + H(+) = S-adenosyl 3-(methylsulfanyl)propylamine + CO2. The protein operates within amine and polyamine biosynthesis; S-adenosylmethioninamine biosynthesis; S-adenosylmethioninamine from S-adenosyl-L-methionine: step 1/1. Functionally, essential for biosynthesis of the polyamines spermidine and spermine. Promotes maintenance and self-renewal of embryonic stem cells, by maintaining spermine levels. The protein is S-adenosylmethionine decarboxylase proenzyme (AMD1) of Bos taurus (Bovine).